Consider the following 228-residue polypeptide: Cytochrome c oxidase subunit 2 (228 aa).

Over 1-26 (MSTWANLGLQDSASPLMEQLIFFHDH) the chain is Mitochondrial intermembrane. A helical transmembrane segment spans residues 27–48 (ALLILVMITVLVGYLMFMLFFN). Residues 49–62 (NYVNRFLLHGQLIE) lie on the Mitochondrial matrix side of the membrane. A helical transmembrane segment spans residues 63–82 (MIWTILPAIILLFIALPSLR). Topologically, residues 83 to 228 (LLYLLDEINE…FIKWISSNNS (146 aa)) are mitochondrial intermembrane. Cu cation contacts are provided by H161, C196, E198, C200, H204, and M207. E198 provides a ligand contact to Mg(2+).

Belongs to the cytochrome c oxidase subunit 2 family. Component of the cytochrome c oxidase (complex IV, CIV), a multisubunit enzyme composed of a catalytic core of 3 subunits and several supernumerary subunits. The complex exists as a monomer or a dimer and forms supercomplexes (SCs) in the inner mitochondrial membrane with ubiquinol-cytochrome c oxidoreductase (cytochrome b-c1 complex, complex III, CIII). Cu cation serves as cofactor.

It localises to the mitochondrion inner membrane. The catalysed reaction is 4 Fe(II)-[cytochrome c] + O2 + 8 H(+)(in) = 4 Fe(III)-[cytochrome c] + 2 H2O + 4 H(+)(out). Component of the cytochrome c oxidase, the last enzyme in the mitochondrial electron transport chain which drives oxidative phosphorylation. The respiratory chain contains 3 multisubunit complexes succinate dehydrogenase (complex II, CII), ubiquinol-cytochrome c oxidoreductase (cytochrome b-c1 complex, complex III, CIII) and cytochrome c oxidase (complex IV, CIV), that cooperate to transfer electrons derived from NADH and succinate to molecular oxygen, creating an electrochemical gradient over the inner membrane that drives transmembrane transport and the ATP synthase. Cytochrome c oxidase is the component of the respiratory chain that catalyzes the reduction of oxygen to water. Electrons originating from reduced cytochrome c in the intermembrane space (IMS) are transferred via the dinuclear copper A center (CU(A)) of subunit 2 and heme A of subunit 1 to the active site in subunit 1, a binuclear center (BNC) formed by heme A3 and copper B (CU(B)). The BNC reduces molecular oxygen to 2 water molecules using 4 electrons from cytochrome c in the IMS and 4 protons from the mitochondrial matrix. The protein is Cytochrome c oxidase subunit 2 (mt:CoII) of Drosophila simulans (Fruit fly).